The sequence spans 195 residues: uncharacterized protein (195 aa).

Residues 86–158 (LPSEGGWTSG…PAPVSGEPPE (73 aa)) form a disordered region.

This is an uncharacterized protein from Homo sapiens (Human).